The sequence spans 366 residues: Putative zinc metalloprotease slr1821 (366 aa).

Residue H20 participates in Zn(2+) binding. The active site involves E21. H24 is a binding site for Zn(2+). 3 consecutive transmembrane segments (helical) span residues 95-115 (AIVISAGVIANLVFAYFLLIG), 293-313 (AVINILPLPALDGGQLVFLLI), and 325-345 (FQMGVMQTGLVLLLSLGVFLI). The PDZ domain maps to 106 to 188 (LVFAYFLLIG…VPITVEVQRG (83 aa)).

It belongs to the peptidase M50B family. The cofactor is Zn(2+).

It is found in the cell inner membrane. In Synechocystis sp. (strain ATCC 27184 / PCC 6803 / Kazusa), this protein is Putative zinc metalloprotease slr1821.